Reading from the N-terminus, the 173-residue chain is Large ribosomal subunit protein uL10 (173 aa).

Belongs to the universal ribosomal protein uL10 family. Part of the ribosomal stalk of the 50S ribosomal subunit. The N-terminus interacts with L11 and the large rRNA to form the base of the stalk. The C-terminus forms an elongated spine to which L12 dimers bind in a sequential fashion forming a multimeric L10(L12)X complex.

Forms part of the ribosomal stalk, playing a central role in the interaction of the ribosome with GTP-bound translation factors. The sequence is that of Large ribosomal subunit protein uL10 from Acidithiobacillus ferrooxidans (strain ATCC 23270 / DSM 14882 / CIP 104768 / NCIMB 8455) (Ferrobacillus ferrooxidans (strain ATCC 23270)).